Reading from the N-terminus, the 315-residue chain is Homoserine kinase (315 aa).

97 to 107 is a binding site for ATP; the sequence is PPARGLGSSAT.

This sequence belongs to the GHMP kinase family. Homoserine kinase subfamily.

The protein localises to the cytoplasm. It carries out the reaction L-homoserine + ATP = O-phospho-L-homoserine + ADP + H(+). The protein operates within amino-acid biosynthesis; L-threonine biosynthesis; L-threonine from L-aspartate: step 4/5. Its function is as follows. Catalyzes the ATP-dependent phosphorylation of L-homoserine to L-homoserine phosphate. The chain is Homoserine kinase from Prochlorococcus marinus (strain MIT 9312).